The primary structure comprises 424 residues: Protein CLP1 homolog 5 (424 aa).

ATP contacts are provided by residues Glu16, Thr56, and 124-129 (DSGKST).

The protein belongs to the Clp1 family. Clp1 subfamily. As to quaternary structure, forms a complex with cleavage and polyadenylation specificity factor (CPSF) subunits PCFS1, FIPS3 and CPSF30.

The protein localises to the nucleus. In terms of biological role, required for endonucleolytic cleavage during polyadenylation-dependent pre-mRNA 3'-end formation. The protein is Protein CLP1 homolog 5 of Arabidopsis thaliana (Mouse-ear cress).